We begin with the raw amino-acid sequence, 482 residues long: Putative fatty acid desaturase 2-like protein FADS2B (482 aa).

Residues 1–31 (MKFEEKCGDNGSIVGRNQSYPGEKHQPKGKP) form a disordered region. Topologically, residues 1-167 (MKFEEKCGDN…EAMNMFHANL (167 aa)) are cytoplasmic. In terms of domain architecture, Cytochrome b5 heme-binding spans 56–132 (LSMYTWLEIQ…LKPLLIGELA (77 aa)). Heme contacts are provided by histidine 90 and histidine 113. The chain crosses the membrane as a helical span at residues 168–188 (GFFFLHFVQILILEVLAWLIV). The Lumenal portion of the chain corresponds to 189 to 190 (YH). Residues 191–211 (FGSGWPVTMFISFLLTISQAS) traverse the membrane as a helical segment. Topologically, residues 212–305 (SSFLQHDAGH…YEEQHLYFYK (94 aa)) are cytoplasmic. The short motif at 217-221 (HDAGH) is the Histidine box-1 element. Residues 254–258 (HFEQH) carry the Histidine box-2 motif. The helical transmembrane segment at 306 to 326 (VWLPLFMPVYLKLPSMQAMYL) threads the bilayer. Topologically, residues 327–343 (QRYWVCFSLQDITWVSS) are lumenal. A helical transmembrane segment spans residues 344–364 (FYIYFITFGLYYGIFGTMLLI). The Cytoplasmic portion of the chain corresponds to 365–482 (YLVKFLESPW…AALWADAYYE (118 aa)). The Histidine box-3 signature appears at 421 to 425 (QIEHH).

The protein belongs to the fatty acid desaturase type 1 family.

It localises to the endoplasmic reticulum membrane. It participates in lipid metabolism; polyunsaturated fatty acid biosynthesis. This Homo sapiens (Human) protein is Putative fatty acid desaturase 2-like protein FADS2B.